A 925-amino-acid polypeptide reads, in one-letter code: Coronin-7 (925 aa).

4 WD repeats span residues 75-115, 124-163, 166-205, and 209-253; these read CHSD…QALP, PEDL…PLTE, AHGD…QASQ, and AHEN…SALA. 2 disordered regions span residues 196–216 and 399–465; these read DPRT…SRDS and LVPP…SLQS. A compositionally biased stretch (polar residues) spans 201–210; the sequence is PQASQSTQAH. Residues 429–460 are compositionally biased toward low complexity; that stretch reads SSPPSSLTSPSTPSSLGPTLSSTSGIGTGPSL. Ser462 and Ser465 each carry phosphoserine. A Glycyl lysine isopeptide (Lys-Gly) (interchain with G-Cter in ubiquitin) cross-link involves residue Lys472. 3 WD repeats span residues 542–582, 592–632, and 635–674; these read QNGA…LEEV, GHME…DRLK, and GHQD…EPLQ. Lys680 participates in a covalent cross-link: Glycyl lysine isopeptide (Lys-Gly) (interchain with G-Cter in ubiquitin). The stretch at 728-768 is one WD 8 repeat; that stretch reads DVAPSTLVPSYEPRHWPGAPDWQGDARVFLYELLPESPFFM. The disordered stretch occupies residues 857 to 925; sequence LQPPDMSPVS…FEGVDEDEWD (69 aa). Positions 866 to 882 are enriched in low complexity; it reads SQAPREAPARRAPSSAQ. Over residues 884 to 896 the composition is skewed to basic and acidic residues; it reads LEEKSDQQKKEEL. Ser915 bears the Phosphoserine mark.

The protein belongs to the WD repeat coronin family. As to quaternary structure, interacts with clathrin adapter AP1 complex. This interaction takes place at Golgi membranes and not AP1-positive endosomal membranes. Interacts (when ubiquitinated at Lys-472) with EPS15. The membrane-associated form is phosphorylated on tyrosine residues. Post-translationally, ubiquitinated via 'Lys-33'-linked ubiquitin chains by the BCR(KLHL20) E3 ubiquitin ligase complex: 'Lys-33'-linked ubiquitination promotes interaction with EPS15 and facilitates actin polymerization at the trans-Golgi network, thereby facilitating post-Golgi trafficking. Deubiquitinated by ZRANB1/TRABID.

The protein localises to the golgi apparatus membrane. Its subcellular location is the golgi apparatus. The protein resides in the trans-Golgi network. It localises to the cytoplasmic vesicle. It is found in the cytoplasm. The protein localises to the cytosol. Its function is as follows. F-actin regulator involved in anterograde Golgi to endosome transport: upon ubiquitination via 'Lys-33'-linked ubiquitin chains by the BCR(KLHL20) E3 ubiquitin ligase complex, interacts with EPS15 and localizes to the trans-Golgi network, where it promotes actin polymerization, thereby facilitating post-Golgi trafficking. May play a role in the maintenance of the Golgi apparatus morphology. The sequence is that of Coronin-7 (CORO7) from Pongo abelii (Sumatran orangutan).